The sequence spans 328 residues: Probable G-protein coupled receptor 82 (328 aa).

Over 1–11 the chain is Extracellular; that stretch reads MTNNSTCIQPS. N-linked (GlcNAc...) asparagine glycosylation is found at Asn3 and Asn4. A helical transmembrane segment spans residues 12 to 32; that stretch reads VISTTALPVTYIFLFIIGLFG. Over 33–55 the chain is Cytoplasmic; it reads NSLAQWVFLTKIGKKTSTHIYLA. The chain crosses the membrane as a helical span at residues 56–76; that stretch reads NLVTANLLVCTAMPFMGIYFL. Topologically, residues 77 to 92 are extracellular; it reads RGFYWKYQSVQCRLVN. Residues 93 to 115 traverse the membrane as a helical segment; that stretch reads FLGTLSMHVSMFVSLLILSWIAI. Residues 116–156 lie on the Cytoplasmic side of the membrane; that stretch reads SRYATLMKKESKQEATSCYERMFYGHVLKRFRQPNFARTMC. The helical transmembrane segment at 157 to 177 threads the bilayer; it reads IYIWGVVLVIIIPVTLYYSVV. The Extracellular portion of the chain corresponds to 178–197; sequence EATEEGQSQCYNRQMELGAR. Residues 198–218 form a helical membrane-spanning segment; sequence PSQIAGLIGTTFIGFSFLVVV. Residues 219–251 are Cytoplasmic-facing; it reads TSYYSLVSHLRRVRTCTSITEKDLTYRSVKRHL. The chain crosses the membrane as a helical span at residues 252–272; it reads LIIQVLLVVCFLPYSIFKPIF. At 273 to 328 the chain is on the extracellular side; it reads YVLHQREGDCQQLNYLIEAKNILTCLASARSSTDPIIFLLLDKTFKKTLYGLLTKS.

Belongs to the G-protein coupled receptor 1 family.

Its subcellular location is the cell membrane. Functionally, orphan receptor. The sequence is that of Probable G-protein coupled receptor 82 (Gpr82) from Mus musculus (Mouse).